Here is a 203-residue protein sequence, read N- to C-terminus: FMN-dependent NADH:quinone oxidoreductase (203 aa).

Residues Ser9, Ser15–Ser17, and Ser138–Gly141 contribute to the FMN site.

This sequence belongs to the azoreductase type 1 family. As to quaternary structure, homodimer. FMN serves as cofactor.

The catalysed reaction is 2 a quinone + NADH + H(+) = 2 a 1,4-benzosemiquinone + NAD(+). It carries out the reaction N,N-dimethyl-1,4-phenylenediamine + anthranilate + 2 NAD(+) = 2-(4-dimethylaminophenyl)diazenylbenzoate + 2 NADH + 2 H(+). In terms of biological role, quinone reductase that provides resistance to thiol-specific stress caused by electrophilic quinones. Also exhibits azoreductase activity. Catalyzes the reductive cleavage of the azo bond in aromatic azo compounds to the corresponding amines. This is FMN-dependent NADH:quinone oxidoreductase from Methylorubrum extorquens (strain CM4 / NCIMB 13688) (Methylobacterium extorquens).